Reading from the N-terminus, the 203-residue chain is MPIGVPRVPYRLPGEPYSQWISLDDRLYQERILFIGEPIDDSLANTIVGVMLYLNSQDPQKDIVMYINSPGGSVTAGMAIYDTMNHIKPDIVTVCVGQAASMGAFLLAAGTKGKRFALPHSRIMLHQPSLGTIQGQASDIEIRARETLRVKRRMNEILAQTTGQPLEKIERDVERDFYLSATEAQAYGIVDRVIQERSEAMAS.

S101 (nucleophile) is an active-site residue. H126 is a catalytic residue.

Belongs to the peptidase S14 family. As to quaternary structure, fourteen ClpP subunits assemble into 2 heptameric rings which stack back to back to give a disk-like structure with a central cavity, resembling the structure of eukaryotic proteasomes.

The protein localises to the cytoplasm. The enzyme catalyses Hydrolysis of proteins to small peptides in the presence of ATP and magnesium. alpha-casein is the usual test substrate. In the absence of ATP, only oligopeptides shorter than five residues are hydrolyzed (such as succinyl-Leu-Tyr-|-NHMec, and Leu-Tyr-Leu-|-Tyr-Trp, in which cleavage of the -Tyr-|-Leu- and -Tyr-|-Trp bonds also occurs).. Cleaves peptides in various proteins in a process that requires ATP hydrolysis. Has a chymotrypsin-like activity. Plays a major role in the degradation of misfolded proteins. This Synechococcus sp. (strain JA-2-3B'a(2-13)) (Cyanobacteria bacterium Yellowstone B-Prime) protein is ATP-dependent Clp protease proteolytic subunit 1.